We begin with the raw amino-acid sequence, 596 residues long: MAGNCGARGALSAHTLLFDLPPALLGELCAVLDSCDGALGWRGLAERLSSSWLDVRHIEKYVDQGKSGTRELLWSWAQKNKTIGDLLQVLQEMGHRRAIHLITNYGAVLSPSEKSYQEGGFPNILFKETANVTVDNVLIPEHNEKGILLKSSISFQNIIEGTRNFHKDFLIGEGEIFEVYRVEIQNLTYAVKLFKQEKKMQCKKHWKRFLSELEVLLLFHHPNILELAAYFTETEKFCLIYPYMRNGTLFDRLQCVGDTAPLPWHIRIGILIGISKAIHYLHNVQPCSVICGSISSANILLDDQFQPKLTDFAMAHFRSHLEHQSCTINMTSSSSKHLWYMPEEYIRQGKLSIKTDVYSFGIVIMEVLTGCRVVLDDPKHIQLRDLLRELMEKRGLDSCLSFLDKKVPPCPRNFSAKLFCLAGRCAATRAKLRPSMDEVLNTLESTQASLYFAEDPPTSLKSFRCPSPLFLENVPSIPVEDDESQNNNLLPSDEGLRIDRMTQKTPFECSQSEVMFLSLDKKPESKRNEEACNMPSSSCEESWFPKYIVPSQDLRPYKVNIDPSSEAPGHSCRSRPVESSCSSKFSWDEYEQYKKE.

Residues 41–106 (WRGLAERLSS…RAIHLITNYG (66 aa)) enclose the Death domain. The residue at position 110 (Ser110) is a Phosphoserine; by IRAK1. One can recognise a Protein kinase domain in the interval 165-452 (FHKDFLIGEG…LESTQASLYF (288 aa)). ATP-binding positions include 171–179 (IGEGEIFEV), Lys192, 295–298 (SSAN), and Asp311. Ser467 is modified (phosphoserine). A disordered region spans residues 560 to 596 (NIDPSSEAPGHSCRSRPVESSCSSKFSWDEYEQYKKE).

Belongs to the protein kinase superfamily. TKL Ser/Thr protein kinase family. Pelle subfamily. In terms of assembly, monomer. Homodimer; disulfide-linked. May interact with IRAK4 (when phosphorylated). Interacts (when phosphorylated at Ser-110) with PIN1 (via WW domain) in response to IL33-mediated (but not TLR4 ligand LPS) dendritic cell stimulation. As to expression, expressed in eosinophils, dendritic cells and/or monocytes (at protein level). Expressed predominantly in peripheral blood lymphocytes.

The protein localises to the cytoplasm. The protein resides in the nucleus. Functionally, putative inactive protein kinase which regulates signaling downstream of immune receptors including IL1R and Toll-like receptors. Inhibits dissociation of IRAK1 and IRAK4 from the Toll-like receptor signaling complex by either inhibiting the phosphorylation of IRAK1 and IRAK4 or stabilizing the receptor complex. Upon IL33-induced lung inflammation, positively regulates expression of IL6, CSF3, CXCL2 and CCL5 mRNAs in dendritic cells. This chain is Interleukin-1 receptor-associated kinase 3, found in Homo sapiens (Human).